Here is a 316-residue protein sequence, read N- to C-terminus: 4-hydroxy-3-methylbut-2-enyl diphosphate reductase (316 aa).

Residue Cys12 participates in [4Fe-4S] cluster binding. (2E)-4-hydroxy-3-methylbut-2-enyl diphosphate contacts are provided by His43 and His81. Residues His43 and His81 each coordinate dimethylallyl diphosphate. Isopentenyl diphosphate-binding residues include His43 and His81. Residue Cys103 coordinates [4Fe-4S] cluster. Position 131 (His131) interacts with (2E)-4-hydroxy-3-methylbut-2-enyl diphosphate. A dimethylallyl diphosphate-binding site is contributed by His131. Residue His131 coordinates isopentenyl diphosphate. The Proton donor role is filled by Glu133. Residue Thr170 coordinates (2E)-4-hydroxy-3-methylbut-2-enyl diphosphate. [4Fe-4S] cluster is bound at residue Cys198. Residues Ser226, Asn228, and Ser271 each contribute to the (2E)-4-hydroxy-3-methylbut-2-enyl diphosphate site. Positions 226, 228, and 271 each coordinate dimethylallyl diphosphate. Positions 226, 228, and 271 each coordinate isopentenyl diphosphate.

It belongs to the IspH family. [4Fe-4S] cluster serves as cofactor.

It carries out the reaction isopentenyl diphosphate + 2 oxidized [2Fe-2S]-[ferredoxin] + H2O = (2E)-4-hydroxy-3-methylbut-2-enyl diphosphate + 2 reduced [2Fe-2S]-[ferredoxin] + 2 H(+). It catalyses the reaction dimethylallyl diphosphate + 2 oxidized [2Fe-2S]-[ferredoxin] + H2O = (2E)-4-hydroxy-3-methylbut-2-enyl diphosphate + 2 reduced [2Fe-2S]-[ferredoxin] + 2 H(+). It participates in isoprenoid biosynthesis; dimethylallyl diphosphate biosynthesis; dimethylallyl diphosphate from (2E)-4-hydroxy-3-methylbutenyl diphosphate: step 1/1. Its pathway is isoprenoid biosynthesis; isopentenyl diphosphate biosynthesis via DXP pathway; isopentenyl diphosphate from 1-deoxy-D-xylulose 5-phosphate: step 6/6. In terms of biological role, catalyzes the conversion of 1-hydroxy-2-methyl-2-(E)-butenyl 4-diphosphate (HMBPP) into a mixture of isopentenyl diphosphate (IPP) and dimethylallyl diphosphate (DMAPP). Acts in the terminal step of the DOXP/MEP pathway for isoprenoid precursor biosynthesis. This Bacillus anthracis (strain A0248) protein is 4-hydroxy-3-methylbut-2-enyl diphosphate reductase.